Consider the following 158-residue polypeptide: Cyclic pyranopterin monophosphate synthase (158 aa).

Substrate contacts are provided by residues 75–77 and 113–114; these read LCH and ME. D128 is a catalytic residue.

Belongs to the MoaC family. As to quaternary structure, homohexamer; trimer of dimers.

It catalyses the reaction (8S)-3',8-cyclo-7,8-dihydroguanosine 5'-triphosphate = cyclic pyranopterin phosphate + diphosphate. Its pathway is cofactor biosynthesis; molybdopterin biosynthesis. Functionally, catalyzes the conversion of (8S)-3',8-cyclo-7,8-dihydroguanosine 5'-triphosphate to cyclic pyranopterin monophosphate (cPMP). The sequence is that of Cyclic pyranopterin monophosphate synthase from Roseiflexus sp. (strain RS-1).